The sequence spans 91 residues: Large ribosomal subunit protein bL27 (91 aa).

This sequence belongs to the bacterial ribosomal protein bL27 family.

The protein is Large ribosomal subunit protein bL27 of Chromobacterium violaceum (strain ATCC 12472 / DSM 30191 / JCM 1249 / CCUG 213 / NBRC 12614 / NCIMB 9131 / NCTC 9757 / MK).